The chain runs to 292 residues: Large ribosomal subunit protein bL19m (292 aa).

The interval 39-68 is disordered; that stretch reads GPGRRQITGPSEPGVFQPPPKPVIVDKRGP. Ser77 bears the Phosphoserine mark.

Belongs to the bacterial ribosomal protein bL19 family. As to quaternary structure, component of the mitochondrial ribosome large subunit (39S) which comprises a 16S rRNA and about 50 distinct proteins.

Its subcellular location is the mitochondrion. The chain is Large ribosomal subunit protein bL19m (MRPL19) from Bos taurus (Bovine).